A 648-amino-acid polypeptide reads, in one-letter code: Serine/arginine repetitive matrix protein 3 (648 aa).

The segment at 1 to 44 (MSSTVNNGATGMPAPPDAANGFPQPGASSGSWPRAEEELRAAEP) is disordered. Residues 55–98 (LDHERKRRVELKCMELQEMMEEQGYSEEEIRQKVGTFRQMLMEK) form the CWF21 domain. Residues 99–109 (EGVLTREDRPG) are compositionally biased toward basic and acidic residues. Disordered stretches follow at residues 99–139 (EGVL…DGPV) and 154–648 (YRTK…SGGF). 3 stretches are compositionally biased toward basic residues: residues 168-186 (PKKKKKKKGSHRRSRKKRR), 199-211 (LRKKKKNVKKHRR), and 219-243 (RRKRRYRSRSLKSKRKEKNKERKRP). Low complexity-rich tracts occupy residues 257-276 (SASSHSPSMSSHYSDSGSPS) and 289-317 (TGSQRSSGSRSPSPSGGSGWGSPQQNGGS). Positions 381-409 (ARRRRRRRRRRRSRSSANAPRRRGRRRTK) are enriched in basic residues. Low complexity-rich tracts occupy residues 414-428 (RGSSRSLSGAHSSSD), 461-471 (RPASTSPSPGT), and 493-502 (SWSSSRSPSK). Positions 525–544 (LGRDKDSEGRARHAEAEAAR) are enriched in basic and acidic residues. Over residues 545-560 (TRRRSRSYSPIRKRRR) the composition is skewed to basic residues. Residues 579–648 (IPYYRPSPSS…SRSSSESGGF (70 aa)) show a composition bias toward low complexity.

The protein belongs to the CWC21 family.

Functionally, may play a role in regulating breast cancer cell invasiveness. May be involved in RYBP-mediated breast cancer progression. The sequence is that of Serine/arginine repetitive matrix protein 3 (Srrm3) from Mus musculus (Mouse).